We begin with the raw amino-acid sequence, 214 residues long: Ras-related protein RABH1c (214 aa).

16–23 contacts GTP; that stretch reads GDQSVGKT. An Effector region motif is present at residues 38–46; the sequence is YQPTIGIDF. GTP is bound by residues 64-68, 123-126, and 153-154; these read DTAGQ, NKTD, and SA. Residues 194–214 are disordered; sequence TSNSSQGEQQGGAGGGGGCSC. Gly residues predominate over residues 202 to 214; that stretch reads QQGGAGGGGGCSC. 2 S-geranylgeranyl cysteine lipidation sites follow: cysteine 212 and cysteine 214. A Cysteine methyl ester modification is found at cysteine 214.

It belongs to the small GTPase superfamily. Rab family. As to quaternary structure, interacts with the C-terminus of GC5, but not with GC3.

The protein resides in the golgi apparatus membrane. It is found in the cytoplasm. It localises to the cytosol. In terms of biological role, protein transport. Regulator of membrane traffic from the Golgi apparatus towards the endoplasmic reticulum (ER). The chain is Ras-related protein RABH1c (RABH1C) from Arabidopsis thaliana (Mouse-ear cress).